Here is an 855-residue protein sequence, read N- to C-terminus: Vomeronasal type-2 receptor 26 (855 aa).

The first 22 residues, 1–22, serve as a signal peptide directing secretion; the sequence is MKLLTAFSPLVVLILFQEQISC. Over 23–595 the chain is Extracellular; that stretch reads YYLTKYASSG…FLAHEDPLGT (573 aa). N-linked (GlcNAc...) asparagine glycans are attached at residues asparagine 101 and asparagine 295. A helical transmembrane segment spans residues 596-616; it reads VLVSLAISLSAFSAMILGLFI. The Cytoplasmic segment spans residues 617–630; sequence CYRETPIVRANNRN. Residues 631-651 traverse the membrane as a helical segment; it reads LSYLLLISLKLCFSCSLMFIG. The Extracellular portion of the chain corresponds to 652-662; sequence QPRTVTCVLRQ. The chain crosses the membrane as a helical span at residues 663–683; sequence IIFGIVFSIVISAILAKTFIV. Over 684–706 the chain is Cytoplasmic; it reads VMAFKAIKPGSILKMGMVTRLSN. A helical membrane pass occupies residues 707–727; the sequence is AIVCCGSIIQVCICAVWLGTY. The Extracellular portion of the chain corresponds to 728 to 753; the sequence is PPFPDVDMHSEFGQIILWCNEGSTLA. The helical transmembrane segment at 754-774 threads the bilayer; sequence FYCVLGYLGFLASLSLLIAFL. Residues 775 to 786 are Cytoplasmic-facing; sequence ARRLPDSFNEAK. The helical transmembrane segment at 787–807 threads the bilayer; that stretch reads TITFSMLVFCSVWISFVPAYL. The Extracellular segment spans residues 808-814; it reads SSKGKTM. Residues 815–835 traverse the membrane as a helical segment; it reads VAVEILSILASSAGLLGCIFL. The Cytoplasmic portion of the chain corresponds to 836–855; sequence PKCYVILLKSGGHSRKKFFK.

Belongs to the G-protein coupled receptor 3 family. In terms of tissue distribution, expressed in the basal epithelium of the vomeronasal organ. Located to vomeronasal sensory neurons that project their axons to six to ten glomeruli that reside in globally conserved areas within the caudal accessory olfactory bulb (AOB).

Its subcellular location is the cell membrane. In terms of biological role, putative pheromone receptor. This Mus musculus (Mouse) protein is Vomeronasal type-2 receptor 26 (Vmn2r26).